The sequence spans 58 residues: Rho-conotoxin TIA (58 aa).

A signal peptide spans 1–16 (MFTVFLLVVLATTGVS). Positions 17–38 (FTLDRASDGGNAVAKKSDVTAR) are excised as a propeptide. Residues 40–42 (NWR) form an interaction with ADRA1B region. Disulfide bonds link C43-C49 and C44-C57. Positions 45 to 47 (LIP) are lacks the Ser-Xaa-Pro motif that is crucial for potent interaction with nAChR. Residue C57 is modified to Cysteine amide.

It belongs to the conotoxin A superfamily. Expressed by the venom duct.

The protein resides in the secreted. In terms of biological role, allosteric inhibitor of alpha-1B adrenergic receptors (ADRA1B). Binds to an allosteric modulatory site on transmembrane helix 6 and 7 at the base of extracellular loop 3 of ADRA1B. Also weakly inhibits alpha-1A (ADRA1A) and alpha-1D (ADRA1D) adrenergic receptors in a competitive manner. Potently inhibits contractions of vas deferens, spleen and aorta in response to noradrenaline. May also inhibits nicotinic acetylcholine receptors with a possible distinct nAChR binding mode from other alpha-conotoxins, due to a different three residue motif (lacks the Ser-Xaa-Pro motif). The protein is Rho-conotoxin TIA of Conus tulipa (Fish-hunting cone snail).